Here is a 284-residue protein sequence, read N- to C-terminus: RNase adapter protein RapZ (284 aa).

8–15 (GRSGSGKS) contributes to the ATP binding site. GTP is bound at residue 56-59 (DVRN). The RNA-binding stretch occupies residues 266–284 (RSRGKNVQSRHRTLEKRKP).

It belongs to the RapZ-like family. RapZ subfamily. In terms of assembly, homotrimer.

In terms of biological role, modulates the synthesis of GlmS, by affecting the processing and stability of the regulatory small RNA GlmZ. When glucosamine-6-phosphate (GlcN6P) concentrations are high in the cell, RapZ binds GlmZ and targets it to cleavage by RNase E. Consequently, GlmZ is inactivated and unable to activate GlmS synthesis. Under low GlcN6P concentrations, RapZ is sequestered and inactivated by an other regulatory small RNA, GlmY, preventing GlmZ degradation and leading to synthesis of GlmS. The chain is RNase adapter protein RapZ from Shigella dysenteriae serotype 1 (strain Sd197).